The primary structure comprises 374 residues: Large ribosomal subunit protein uL4 (374 aa).

Residues 336 to 355 (EKAMAKGMQNKKNREARHAA) form a disordered region.

It belongs to the universal ribosomal protein uL4 family.

This is Large ribosomal subunit protein uL4 (RPL4) from Trypanosoma brucei brucei.